We begin with the raw amino-acid sequence, 129 residues long: Small ribosomal subunit protein uS11 (129 aa).

It belongs to the universal ribosomal protein uS11 family. As to quaternary structure, part of the 30S ribosomal subunit. Interacts with proteins S7 and S18. Binds to IF-3.

Located on the platform of the 30S subunit, it bridges several disparate RNA helices of the 16S rRNA. Forms part of the Shine-Dalgarno cleft in the 70S ribosome. The protein is Small ribosomal subunit protein uS11 of Lysinibacillus sphaericus (strain C3-41).